We begin with the raw amino-acid sequence, 283 residues long: MKKTLIALAIAASAASGMAHAWMTGDFNGSVDIGGSITADDYRQKWEWKVGTGLNGFGNVLNDLTNGGTKLTITVTGNKPILLGRTKEAFATPVTGGVDGIPHIAFTDYEGASVVLRNPDGETNKKGLAYFVLPMKNAEGTKVGSVKVNASYAGVLGRGGVTSADGELLSLFADGLSSIFYGGLPRGSELSAGSAAAARTKLFGSLSRNDILGQIQRVNANITSLVDVAGSYRENMEYTDGTVVSAAYALGIANGQTIEATFNQAVTTSTQWSAPLNVAITYY.

Positions 1 to 21 are cleaved as a signal peptide; sequence MKKTLIALAIAASAASGMAHA.

This sequence belongs to the fimbrial K88 protein family. K88 fimbria, 0.1-1 micrometer in length and 7 nanometers in diameter, is composed of about 100 identical subunits.

It is found in the fimbrium. Its function is as follows. K88 major fimbrial subunit. Fimbriae (also called pili), are polar filaments radiating from the surface of the bacterium to a length of 0.5-1.5 micrometers and numbering 100-300 per cell. They enable bacteria to colonize the epithelium of specific host organs. In Escherichia coli, this protein is K88 fimbrial protein AC (faeG).